The sequence spans 391 residues: Nucleosome assembly protein 1-like 1 (391 aa).

Met-1 is modified (N-acetylmethionine). A compositionally biased stretch (basic and acidic residues) spans 1 to 10 (MADIDNKEQS). The segment at 1–32 (MADIDNKEQSELDQDLDDVEEVEEEETGEETK) is disordered. N-acetylalanine is present on Ala-2. Ser-10 carries the phosphoserine modification. Positions 11 to 28 (ELDQDLDDVEEVEEEETG) are enriched in acidic residues. Residues Thr-62 and Thr-64 each carry the phosphothreonine modification. Phosphoserine is present on Ser-69. Lys-116 carries the post-translational modification N6-acetyllysine. An NAP1L motif motif is present at residues 125 to 150 (YEPTEEECEWKPDEEDEISEELKEKA). Positions 132–143 (CEWKPDEEDEIS) are enriched in acidic residues. Residues 132 to 163 (CEWKPDEEDEISEELKEKAKIEDEKKDEEKED) are disordered. Ser-143 is modified (phosphoserine). The span at 144–163 (EELKEKAKIEDEKKDEEKED) shows a compositional bias: basic and acidic residues. Residues 273-279 (IKKKQKH) carry the Nuclear localization signal motif. Over residues 346 to 376 (AIEDDDDDYDEEGEEADEEGEEEGDEENDPD) the composition is skewed to acidic residues. Residues 346–391 (AIEDDDDDYDEEGEEADEEGEEEGDEENDPDYDPKKDQNPAECKQQ) form a disordered region. A compositionally biased stretch (basic and acidic residues) spans 377–391 (YDPKKDQNPAECKQQ). Residue Cys-388 is modified to Cysteine methyl ester. Residue Cys-388 is the site of S-farnesyl cysteine attachment. The propeptide at 389–391 (KQQ) is removed in mature form.

This sequence belongs to the nucleosome assembly protein (NAP) family. As to quaternary structure, homodimer. The dimer binds strongly and sequentially to single and double H2A-H2B heterodimers. Interacts with ERCC6; this interaction increases ERCC6 processivity. Interacts with RAD54. Interacts with SETD1A. (Microbial infection) Interacts with human herpesvirus 8 protein LANA1 (via N-terminus); this interaction is required for LANA1-dependent DNA replication. In terms of assembly, (Microbial infection) Interacts with hepatitis virus protein NS5A (via C-terminus); this interaction sequesters NAP1L1 in the cytoplasm, blocking its nuclear translocation. As to quaternary structure, (Microbial infection) Interacts with Chikungunya virus non-structural protein 3 (via C-terminus). Post-translationally, monoglycylated on glutamate residues. Cannot be polyglycylated due to the absence of functional TTLL10 in human. Polyglutamylated by TTLL4 on glutamate residues, resulting in polyglutamate chains on the gamma-carboxyl group. Both polyglutamylation and monoglycylation modifications can coexist on the same protein on adjacent residues, and lowering polyglycylation levels increases polyglutamylation, and reciprocally. Ubiquitously expressed.

The protein localises to the nucleus. It localises to the melanosome. The protein resides in the cytoplasm. Functionally, histone chaperone that plays a role in the nuclear import of H2A-H2B and nucleosome assembly. Also participates in several important DNA repair mechanisms: greatly enhances ERCC6-mediated chromatin remodeling which is essential for transcription-coupled nucleotide excision DNA repair. Also stimulates homologous recombination (HR) by RAD51 and RAD54 which is essential in mitotic DNA double strand break (DSB) repair. Plays a key role in the regulation of embryonic neurogenesis. Promotes the proliferation of neural progenitors and inhibits neuronal differentiation during cortical development. Regulates neurogenesis via the modulation of RASSF10; regulates RASSF10 expression by promoting SETD1A-mediated H3K4 methylation at the RASSF10 promoter. In terms of biological role, (Microbial infection) Positively regulates Epstein-Barr virus reactivation in epithelial cells through the induction of viral BZLF1 expression. Its function is as follows. (Microbial infection) Together with human herpesvirus 8 protein LANA1, assists the proper assembly of the nucleosome on the replicated viral DNA. This is Nucleosome assembly protein 1-like 1 (NAP1L1) from Homo sapiens (Human).